Here is a 253-residue protein sequence, read N- to C-terminus: Phosphoadenosine 5'-phosphosulfate reductase (253 aa).

C239 (nucleophile; cysteine thiosulfonate intermediate) is an active-site residue.

The protein belongs to the PAPS reductase family. CysH subfamily.

The protein localises to the cytoplasm. It catalyses the reaction [thioredoxin]-disulfide + sulfite + adenosine 3',5'-bisphosphate + 2 H(+) = [thioredoxin]-dithiol + 3'-phosphoadenylyl sulfate. It participates in sulfur metabolism; hydrogen sulfide biosynthesis; sulfite from sulfate: step 3/3. In terms of biological role, catalyzes the formation of sulfite from phosphoadenosine 5'-phosphosulfate (PAPS) using thioredoxin as an electron donor. The protein is Phosphoadenosine 5'-phosphosulfate reductase of Aliivibrio fischeri (strain ATCC 700601 / ES114) (Vibrio fischeri).